The primary structure comprises 302 residues: N(G),N(G)-dimethylarginine dimethylaminohydrolase (302 aa).

Residues D102, R127, and R172 each coordinate substrate. Residue H201 is the Proton donor of the active site. C295 serves as the catalytic Nucleophile.

Belongs to the DDAH family.

It carries out the reaction N(omega),N(omega)-dimethyl-L-arginine + H2O = dimethylamine + L-citrulline. The enzyme catalyses N(omega)-methyl-L-arginine + H2O = L-citrulline + methylamine. Its function is as follows. Hydrolyzes N(G),N(G)-dimethyl-L-arginine (ADMA) and N(G)-monomethyl-L-arginine (MMA). The protein is N(G),N(G)-dimethylarginine dimethylaminohydrolase of Mycobacterium tuberculosis (strain ATCC 25618 / H37Rv).